The following is a 642-amino-acid chain: MPVITLPDGSQRHYDHPVSPMDVALDIGPGLAKATIAGRVNGELVDACDLIENDATLAIITAKDEEGLEIIRHSCAHLLGHAIKQLWPHTKMAIGPVVDNGFYYDVDLDRTLTQEDVEALEKRMHELAEKNYDVIKKKVSWHDARETFVKRGETYKVAILDENIAHDDKPGLYHHEEYVDMCRGPHVPNMRFCHHFKLMKTAGAYWRGDSNNKMLQRIYGTAWADKKALNAYLQRLEEAAKRDHRKIGKQLDLYHMQEEAPGMVFWHNDGWTIFRELEVFVRSKLKEYQYQEVKGPFMMDRVLWEKTGHWDNYKDAMFTTSSENREYCIKPMNCPGHVQIFNQGLKSYRDLPLRMAEFGSCHRNEPSGALHGLMRVRGFTQDDAHIFCTEEQIRDEVNACIRMVYDMYSPFGFEKIVVKLSTRPDKRIGSDEMWDRAEADLAVALEENNIPFEYQLGEGAFYGPKIEFTLYDCLDRAWQCGTVQLDFSLPSRLSASYVGEDNERKVPVMIHRAILGSMERFIGILTEEFAGFFPTWLAPVQVVVMNITDSQSGYVNELTQKLQNAGIRVKADLRNEKIGFKIREHTLRRVPYMLVCGDKEVEAGKVAVRTRRGKDLGSLDVNDVIEKLQQEIRSRSLQQLEE.

The region spanning 1–61 is the TGS domain; that stretch reads MPVITLPDGS…ENDATLAIIT (61 aa). The catalytic stretch occupies residues 243-534; that stretch reads DHRKIGKQLD…LTEEFAGFFP (292 aa). Residues Cys334, His385, and His511 each contribute to the Zn(2+) site.

The protein belongs to the class-II aminoacyl-tRNA synthetase family. As to quaternary structure, homodimer. Zn(2+) serves as cofactor.

It localises to the cytoplasm. It carries out the reaction tRNA(Thr) + L-threonine + ATP = L-threonyl-tRNA(Thr) + AMP + diphosphate + H(+). Its function is as follows. Catalyzes the attachment of threonine to tRNA(Thr) in a two-step reaction: L-threonine is first activated by ATP to form Thr-AMP and then transferred to the acceptor end of tRNA(Thr). Also edits incorrectly charged L-seryl-tRNA(Thr). The protein is Threonine--tRNA ligase of Salmonella paratyphi C (strain RKS4594).